The chain runs to 570 residues: Urease subunit alpha (570 aa).

Positions 133–570 (GGIDNHIHYI…LPLAQLYNLF (438 aa)) constitute a Urease domain. 3 residues coordinate Ni(2+): His138, His140, and Lys221. N6-carboxylysine is present on Lys221. Substrate is bound at residue His223. The Ni(2+) site is built by His250 and His276. The active-site Proton donor is His324. Asp364 contacts Ni(2+).

The protein belongs to the metallo-dependent hydrolases superfamily. Urease alpha subunit family. As to quaternary structure, heterotrimer of UreA (gamma), UreB (beta) and UreC (alpha) subunits. Three heterotrimers associate to form the active enzyme. Requires Ni cation as cofactor. In terms of processing, carboxylation allows a single lysine to coordinate two nickel ions.

The protein resides in the cytoplasm. It catalyses the reaction urea + 2 H2O + H(+) = hydrogencarbonate + 2 NH4(+). It participates in nitrogen metabolism; urea degradation; CO(2) and NH(3) from urea (urease route): step 1/1. The chain is Urease subunit alpha from Cytophaga hutchinsonii (strain ATCC 33406 / DSM 1761 / CIP 103989 / NBRC 15051 / NCIMB 9469 / D465).